Reading from the N-terminus, the 457-residue chain is Multidrug resistance protein MdtK (457 aa).

12 consecutive transmembrane segments (helical) span residues 11–31 (LLAL…MGFV), 53–73 (IWLP…PVIA), 93–113 (WLAS…GYII), 127–147 (AVGY…FQVA), 160–180 (GMVM…IFIY), 188–208 (LGGI…FIAM), 243–263 (LPIA…ALLV), 276–296 (IALN…AAVT), 314–334 (AART…IFTV), 357–377 (LMLL…GSGI), 387–407 (IFFI…YILA), and 418–438 (PAGF…LMML).

It belongs to the multi antimicrobial extrusion (MATE) (TC 2.A.66.1) family. MdtK subfamily.

Its subcellular location is the cell inner membrane. Multidrug efflux pump that functions probably as a Na(+)/drug antiporter. The protein is Multidrug resistance protein MdtK of Salmonella arizonae (strain ATCC BAA-731 / CDC346-86 / RSK2980).